Here is a 491-residue protein sequence, read N- to C-terminus: Protein nucleotidyltransferase YdiU (491 aa).

ATP contacts are provided by glycine 94, glycine 96, arginine 97, lysine 117, aspartate 129, glycine 130, arginine 180, and arginine 187. Aspartate 256 acts as the Proton acceptor in catalysis. The Mg(2+) site is built by asparagine 257 and aspartate 266. Aspartate 266 contributes to the ATP binding site.

Belongs to the SELO family. Requires Mg(2+) as cofactor. Mn(2+) serves as cofactor.

It carries out the reaction L-seryl-[protein] + ATP = 3-O-(5'-adenylyl)-L-seryl-[protein] + diphosphate. The enzyme catalyses L-threonyl-[protein] + ATP = 3-O-(5'-adenylyl)-L-threonyl-[protein] + diphosphate. It catalyses the reaction L-tyrosyl-[protein] + ATP = O-(5'-adenylyl)-L-tyrosyl-[protein] + diphosphate. The catalysed reaction is L-histidyl-[protein] + UTP = N(tele)-(5'-uridylyl)-L-histidyl-[protein] + diphosphate. It carries out the reaction L-seryl-[protein] + UTP = O-(5'-uridylyl)-L-seryl-[protein] + diphosphate. The enzyme catalyses L-tyrosyl-[protein] + UTP = O-(5'-uridylyl)-L-tyrosyl-[protein] + diphosphate. Functionally, nucleotidyltransferase involved in the post-translational modification of proteins. It can catalyze the addition of adenosine monophosphate (AMP) or uridine monophosphate (UMP) to a protein, resulting in modifications known as AMPylation and UMPylation. This Bacillus cytotoxicus (strain DSM 22905 / CIP 110041 / 391-98 / NVH 391-98) protein is Protein nucleotidyltransferase YdiU.